A 366-amino-acid chain; its full sequence is C-X-C chemokine receptor type 3 (366 aa).

Residues 1-55 lie on the Extracellular side of the membrane; the sequence is MVPEMSERQEFQASDFAYLLENSSYDYGENETYFCCTSPPCPQDFSLNFDRTFLP. Residue Asn22 is glycosylated (N-linked (GlcNAc...) asparagine). A sulfotyrosine mark is found at Tyr25 and Tyr27. N-linked (GlcNAc...) asparagine glycosylation is present at Asn30. A helical transmembrane segment spans residues 56-76; that stretch reads VLYSLLFVLGLLGNGIVAVVL. Over 77 to 88 the chain is Cytoplasmic; that stretch reads LSQRAALSSTDT. The chain crosses the membrane as a helical span at residues 89–109; the sequence is FLLHLAVADALLVLTLPLWAV. Over 110–124 the chain is Extracellular; sequence DAAIQWVFGSGLCKV. An intrachain disulfide couples Cys122 to Cys201. The chain crosses the membrane as a helical span at residues 125–145; that stretch reads AGALFNINFYAGALLLACISF. The Cytoplasmic portion of the chain corresponds to 146-167; it reads DRYLSIVHATQLYRRGPPTRVA. The helical transmembrane segment at 168 to 188 threads the bilayer; that stretch reads LTCVAVWGLCLLFALPDFIFL. The Extracellular segment spans residues 189-221; that stretch reads SSHHDNRLNATHCQYNFPQEGHTALRILQLVAG. A glycan (N-linked (GlcNAc...) asparagine) is linked at Asn197. Residues 222 to 242 form a helical membrane-spanning segment; that stretch reads FLLPLLVMAYCYARILAVLLV. The Cytoplasmic segment spans residues 243–254; it reads SRGQRRLRAMRL. Residues 255–275 form a helical membrane-spanning segment; the sequence is VVVVVVAFALCWTPYHLVVLV. Residues 276–299 are Extracellular-facing; that stretch reads DTLMDLGALARNCGRESSVDIAKS. Residues 300–320 form a helical membrane-spanning segment; that stretch reads VTSGMGYMHCCLNPLLYAFVG. Topologically, residues 321 to 366 are cytoplasmic; it reads VKFRERMWVLLVRLGCPDQRCHQRQPSASRRESSWSETTEASYSGL. The segment at 341 to 366 is disordered; the sequence is CHQRQPSASRRESSWSETTEASYSGL. A compositionally biased stretch (low complexity) spans 355 to 366; that stretch reads WSETTEASYSGL.

Belongs to the G-protein coupled receptor 1 family. Homomer. Forms heteromers with ACKR4. Interacts with PF4/CXCL4. Post-translationally, sulfation on Tyr-25 and Tyr-27 is essential for CXCL10 binding. In terms of processing, N-glycosylated.

It localises to the cell membrane. Receptor for the C-X-C chemokine CXCL9, CXCL10 and CXCL11 and mediates the proliferation, survival and angiogenic activity of mesangial cells through a heterotrimeric G-protein signaling pathway. Probably promotes cell chemotaxis response. Binds to CCL21. Upon activation by PF4, induces activated T-lymphocytes migration mediated via downstream Ras/extracellular signal-regulated kinase (ERK) signaling. The sequence is that of C-X-C chemokine receptor type 3 (CXCR3) from Bos taurus (Bovine).